Consider the following 491-residue polypeptide: Zinc finger and SCAN domain-containing protein 22 (491 aa).

At serine 9 the chain carries Phosphoserine. Positions 49–131 (RLRFRHFRYE…VLVEDLTQVL (83 aa)) constitute an SCAN box domain. Disordered regions lie at residues 134 to 161 (RGWD…SNVT) and 204 to 249 (FKKT…DKFD). Basic and acidic residues predominate over residues 214-224 (VPTDQRGRESG). Polar residues predominate over residues 225–241 (ASRNSSSAWPNLTSQEK). 8 C2H2-type zinc fingers span residues 268–290 (SKCR…QKTH), 296–318 (YACS…QVVH), 324–346 (HECK…QRIH), 352–374 (YKCG…QRVH), 380–402 (YECD…QRIH), 408–430 (YKCD…LRIH), 436–458 (YQCK…QRIH), and 464–486 (YKCS…LRIH). Residue lysine 443 forms a Glycyl lysine isopeptide (Lys-Gly) (interchain with G-Cter in SUMO2) linkage.

Belongs to the krueppel C2H2-type zinc-finger protein family.

It localises to the nucleus. May be involved in transcriptional regulation. This Homo sapiens (Human) protein is Zinc finger and SCAN domain-containing protein 22 (ZSCAN22).